We begin with the raw amino-acid sequence, 139 residues long: ATP synthase epsilon chain (139 aa).

It belongs to the ATPase epsilon chain family. As to quaternary structure, F-type ATPases have 2 components, CF(1) - the catalytic core - and CF(0) - the membrane proton channel. CF(1) has five subunits: alpha(3), beta(3), gamma(1), delta(1), epsilon(1). CF(0) has three main subunits: a, b and c.

Its subcellular location is the cell inner membrane. Produces ATP from ADP in the presence of a proton gradient across the membrane. The protein is ATP synthase epsilon chain of Serratia proteamaculans (strain 568).